We begin with the raw amino-acid sequence, 204 residues long: Probable molybdenum cofactor guanylyltransferase (204 aa).

Residues 10-12 (LSG), lysine 22, aspartate 75, and aspartate 104 each bind GTP. Aspartate 104 lines the Mg(2+) pocket.

The protein belongs to the MobA family. Mg(2+) serves as cofactor.

Its subcellular location is the cytoplasm. It catalyses the reaction Mo-molybdopterin + GTP + H(+) = Mo-molybdopterin guanine dinucleotide + diphosphate. Transfers a GMP moiety from GTP to Mo-molybdopterin (Mo-MPT) cofactor (Moco or molybdenum cofactor) to form Mo-molybdopterin guanine dinucleotide (Mo-MGD) cofactor. This chain is Probable molybdenum cofactor guanylyltransferase, found in Methanocaldococcus jannaschii (strain ATCC 43067 / DSM 2661 / JAL-1 / JCM 10045 / NBRC 100440) (Methanococcus jannaschii).